The chain runs to 893 residues: cGMP-specific 3',5'-cyclic phosphodiesterase (893 aa).

GAF domains are found at residues 21-173 (DIDV…GIGI) and 205-390 (NLEC…GLGI). The PDEase domain occupies 420–743 (GQDQTEKLIQ…RNWQDLAEKV (324 aa)). Residue His-496 is the Proton donor of the active site. The a divalent metal cation site is built by His-500, His-536, Asp-537, and Asp-647. 2 disordered regions span residues 784–807 (QQSQ…RLSI) and 844–893 (HVSE…CALL). 2 stretches are compositionally biased toward basic and acidic residues: residues 789 to 800 (GGDDSHTPEHQR) and 844 to 853 (HVSEDMDDKS). Residues 864–880 (SVGRMSASSSTSSAGTV) are compositionally biased toward low complexity. Residues 883–893 (SKKRSKLCALL) are compositionally biased toward basic residues. Residue Cys-890 is modified to Cysteine methyl ester. A lipid anchor (S-farnesyl cysteine) is attached at Cys-890. The propeptide at 891-893 (ALL) is removed in mature form.

The protein belongs to the cyclic nucleotide phosphodiesterase family. In terms of assembly, interacts with PrBP. The cofactor is a divalent metal cation.

The protein localises to the cell membrane. It carries out the reaction 3',5'-cyclic GMP + H2O = GMP + H(+). Its function is as follows. Has a role regulating cGMP transport in Malpighian tubule principal cells. This is cGMP-specific 3',5'-cyclic phosphodiesterase from Drosophila virilis (Fruit fly).